Here is a 135-residue protein sequence, read N- to C-terminus: Large ribosomal subunit protein uL16c (135 aa).

The protein belongs to the universal ribosomal protein uL16 family. Part of the 50S ribosomal subunit.

The protein resides in the plastid. The protein localises to the chloroplast. The protein is Large ribosomal subunit protein uL16c of Gossypium barbadense (Sea Island cotton).